Reading from the N-terminus, the 494-residue chain is Keratin, type I cytoskeletal 12 (494 aa).

The segment covering 1 to 12 has biased composition (polar residues); it reads MDLSNNTMSLSV. A disordered region spans residues 1–32; sequence MDLSNNTMSLSVRTPGLSRRLSSQSVIGRPRG. The head stretch occupies residues 1 to 124; it reads MDLSNNTMSL…GNDGGLLSGS (124 aa). A coil 1A region spans residues 125–160; sequence EKETMQNLNDRLASYLDKVRALEEANTELENKIREW. An IF rod domain is found at 125–440; the sequence is EKETMQNLND…RLLDGEAQGD (316 aa). The tract at residues 164–182 is linker 1; it reads RGTGTADASQSDYSKYYPL. A coil 1B region spans residues 183-274; that stretch reads IEDLRNKIIS…KNHEDELQSF (92 aa). Residues 275–297 form a linker 12 region; sequence RVGGPGEVSVEMDAAPGVDLTRL. A coil 2 region spans residues 298 to 435; it reads LNDMRAQYET…IETYRRLLDG (138 aa). Residues 436 to 494 are tail; the sequence is EAQGDGLEESLFVTDSKSQAQSTDSSKDPTKTRKIKTVVQEMVNGEVVSSQVQEIEELM. A disordered region spans residues 446 to 468; it reads LFVTDSKSQAQSTDSSKDPTKTR. A compositionally biased stretch (polar residues) spans 448–459; the sequence is VTDSKSQAQSTD.

The protein belongs to the intermediate filament family. As to quaternary structure, heterotetramer of two type I and two type II keratins. Keratin-3 associates with keratin-12. In terms of tissue distribution, expressed in the corneal epithelium (at protein level).

In terms of biological role, involved in corneal epithelium organization, integrity and corneal keratin expression. This is Keratin, type I cytoskeletal 12 (KRT12) from Homo sapiens (Human).